Reading from the N-terminus, the 684-residue chain is TBC1 domain family member 23 (684 aa).

In terms of domain architecture, Rab-GAP TBC spans 44–225 (PLPAELRAKV…AIWDGYLQQA (182 aa)). Serine 300 is subject to Phosphoserine. The Rhodanese domain occupies 334-446 (EGVRFFVVDC…LQQHLADINV (113 aa)). Serine 469, serine 474, and serine 507 each carry phosphoserine. Threonine 514 is subject to Phosphothreonine. Positions 514-558 (TPVDRHVSSSDRVGKPYRGVKPVFSIGDEEEYDTDEIDSSSMSDD) are may mediate the interaction with C17orf75, FAM91A1 and WDR11. Residues 514-684 (TPVDRHVSSS…IMKVLDALES (171 aa)) are may mediate the interaction with WASHC1. At serine 556 the chain carries Phosphoserine. Residues 559 to 684 (DRKEVVNIQT…IMKVLDALES (126 aa)) form a may mediate the interaction with FKBP15 and WASHC2; required for endosome to Golgi trafficking region.

Directly interacts with GOLGA1 and GOLGA4. Interacts with FAM91A1, C17ORF75 and WDR11; the interaction recruits TBC1D23 to AP-1-derived vesicles. Directly interacts with WASHC1 and WASHC2/FAM21. Interacts with FKBP15.

The protein localises to the golgi apparatus. Its subcellular location is the trans-Golgi network. It localises to the cytoplasmic vesicle. Its function is as follows. Putative Rab GTPase-activating protein which plays a role in vesicular trafficking. Involved in endosome-to-Golgi trafficking. Acts as a bridging protein by binding simultaneously to golgins, including GOLGA1 and GOLGA4, located at the trans-Golgi, and to the WASH complex, located on endosome-derived vesicles. Together with WDR11 complex facilitates the golgin-mediated capture of vesicles generated using AP-1. Plays a role in brain development, including in cortical neuron positioning. May also be important for neurite outgrowth, possibly through its involvement in membrane trafficking and cargo delivery, 2 processes which are essential for axonal and dendritic growth. May act as a general inhibitor of innate immunity signaling, strongly inhibiting multiple TLR and dectin/CLEC7A-signaling pathways. Does not alter initial activation events, but instead affects maintenance of inflammatory gene expression several hours after bacterial lipopolysaccharide (LPS) challenge. This Mus musculus (Mouse) protein is TBC1 domain family member 23 (Tbc1d23).